Here is a 225-residue protein sequence, read N- to C-terminus: UPF0758 protein XOO0462 (225 aa).

One can recognise an MPN domain in the interval 102–224; sequence ALSDPPSVGR…PVSLAERGWL (123 aa). Zn(2+)-binding residues include histidine 173, histidine 175, and aspartate 186. Positions 173-186 match the JAMM motif motif; the sequence is HNHPSGNPEPSEAD.

The protein belongs to the UPF0758 family.

The protein is UPF0758 protein XOO0462 of Xanthomonas oryzae pv. oryzae (strain MAFF 311018).